Here is a 668-residue protein sequence, read N- to C-terminus: Threonine--tRNA ligase (668 aa).

In terms of domain architecture, TGS spans 1-64; it reads MSQSVSLTFP…TDGKIEIITR (64 aa). Residues 245–553 form a catalytic region; it reads DHRKLGREMD…LIENFAGHMP (309 aa). Zn(2+) is bound by residues cysteine 347, histidine 398, and histidine 530.

Belongs to the class-II aminoacyl-tRNA synthetase family. In terms of assembly, homodimer. Zn(2+) is required as a cofactor.

The protein resides in the cytoplasm. The catalysed reaction is tRNA(Thr) + L-threonine + ATP = L-threonyl-tRNA(Thr) + AMP + diphosphate + H(+). In terms of biological role, catalyzes the attachment of threonine to tRNA(Thr) in a two-step reaction: L-threonine is first activated by ATP to form Thr-AMP and then transferred to the acceptor end of tRNA(Thr). Also edits incorrectly charged L-seryl-tRNA(Thr). This chain is Threonine--tRNA ligase, found in Rhizobium etli (strain ATCC 51251 / DSM 11541 / JCM 21823 / NBRC 15573 / CFN 42).